A 616-amino-acid polypeptide reads, in one-letter code: Dihydroxy-acid dehydratase (616 aa).

Aspartate 81 provides a ligand contact to Mg(2+). Residue cysteine 122 coordinates [2Fe-2S] cluster. Positions 123 and 124 each coordinate Mg(2+). At lysine 124 the chain carries N6-carboxylysine. Cysteine 195 is a [2Fe-2S] cluster binding site. Glutamate 491 contributes to the Mg(2+) binding site. The active-site Proton acceptor is serine 517.

Belongs to the IlvD/Edd family. As to quaternary structure, homodimer. [2Fe-2S] cluster serves as cofactor. The cofactor is Mg(2+).

It carries out the reaction (2R)-2,3-dihydroxy-3-methylbutanoate = 3-methyl-2-oxobutanoate + H2O. It catalyses the reaction (2R,3R)-2,3-dihydroxy-3-methylpentanoate = (S)-3-methyl-2-oxopentanoate + H2O. Its pathway is amino-acid biosynthesis; L-isoleucine biosynthesis; L-isoleucine from 2-oxobutanoate: step 3/4. It participates in amino-acid biosynthesis; L-valine biosynthesis; L-valine from pyruvate: step 3/4. Its function is as follows. Functions in the biosynthesis of branched-chain amino acids. Catalyzes the dehydration of (2R,3R)-2,3-dihydroxy-3-methylpentanoate (2,3-dihydroxy-3-methylvalerate) into 2-oxo-3-methylpentanoate (2-oxo-3-methylvalerate) and of (2R)-2,3-dihydroxy-3-methylbutanoate (2,3-dihydroxyisovalerate) into 2-oxo-3-methylbutanoate (2-oxoisovalerate), the penultimate precursor to L-isoleucine and L-valine, respectively. This chain is Dihydroxy-acid dehydratase, found in Pectobacterium atrosepticum (strain SCRI 1043 / ATCC BAA-672) (Erwinia carotovora subsp. atroseptica).